The primary structure comprises 379 residues: MTSETTVNLLDFDAEGLVAYCGSLGEKPFRAKQLQRWIHQYNAGDFDGMTDLAKSLREKLKGRASIGMPEIASDHVSTDGTRKWLIDVGNGNAVETVFIPEETRGTLCVSSQAGCAVNCRFCSTGKQGFSRNLSTAEIIGQLRMAEFALRASLGRAPGPNGKAERVVTNVVMMGMGEPLLNYSAVVPAMRLMLDDNAYGLSRRRVTLSTSGVVPMMDRLGAELPVALAVSLHAPNDPLRDELVPLNKKYPLRELMAACQRYLKVAPRDFITFEYCMLDGVNDTEAHARELLAVTRDVPCKFNLIPFNPFPESGLIRSKPEQIKRFAQVLIDAGVVTTVRKTRGDDIDAACGQLAGAVKDRTRLAERTGAAGKIIEVRAI.

Glutamate 95 (proton acceptor) is an active-site residue. Residues 101–345 (EETRGTLCVS…TTVRKTRGDD (245 aa)) enclose the Radical SAM core domain. The cysteines at positions 108 and 350 are disulfide-linked. Positions 115, 119, and 122 each coordinate [4Fe-4S] cluster. S-adenosyl-L-methionine-binding positions include 176-177 (GE), serine 208, 230-232 (SLH), and asparagine 307. Cysteine 350 serves as the catalytic S-methylcysteine intermediate.

This sequence belongs to the radical SAM superfamily. RlmN family. [4Fe-4S] cluster is required as a cofactor.

Its subcellular location is the cytoplasm. The catalysed reaction is adenosine(2503) in 23S rRNA + 2 reduced [2Fe-2S]-[ferredoxin] + 2 S-adenosyl-L-methionine = 2-methyladenosine(2503) in 23S rRNA + 5'-deoxyadenosine + L-methionine + 2 oxidized [2Fe-2S]-[ferredoxin] + S-adenosyl-L-homocysteine. It catalyses the reaction adenosine(37) in tRNA + 2 reduced [2Fe-2S]-[ferredoxin] + 2 S-adenosyl-L-methionine = 2-methyladenosine(37) in tRNA + 5'-deoxyadenosine + L-methionine + 2 oxidized [2Fe-2S]-[ferredoxin] + S-adenosyl-L-homocysteine. Functionally, specifically methylates position 2 of adenine 2503 in 23S rRNA and position 2 of adenine 37 in tRNAs. m2A2503 modification seems to play a crucial role in the proofreading step occurring at the peptidyl transferase center and thus would serve to optimize ribosomal fidelity. The chain is Dual-specificity RNA methyltransferase RlmN from Burkholderia lata (strain ATCC 17760 / DSM 23089 / LMG 22485 / NCIMB 9086 / R18194 / 383).